The sequence spans 584 residues: Arginine--tRNA ligase (584 aa).

The 'HIGH' region motif lies at 130 to 140 (PNVAKEMHVGH).

This sequence belongs to the class-I aminoacyl-tRNA synthetase family. As to quaternary structure, monomer.

Its subcellular location is the cytoplasm. It catalyses the reaction tRNA(Arg) + L-arginine + ATP = L-arginyl-tRNA(Arg) + AMP + diphosphate. This chain is Arginine--tRNA ligase, found in Protochlamydia amoebophila (strain UWE25).